Here is a 303-residue protein sequence, read N- to C-terminus: Sulfotransferase 6B1 (303 aa).

65-70 contributes to the 3'-phosphoadenylyl sulfate binding site; it reads KCGSNW. Catalysis depends on His-118, which acts as the Proton acceptor. Residues Arg-140, Ser-148, Tyr-203, 237–242, and 259–261 contribute to the 3'-phosphoadenylyl sulfate site; these read STFLAM and RKG.

Belongs to the sulfotransferase 1 family. Expressed in brain, heart, kidney, thymus, lung, liver and testis.

The protein resides in the cytoplasm. The protein localises to the cytosol. The catalysed reaction is thyroxine + 3'-phosphoadenylyl sulfate = thyroxine sulfate + adenosine 3',5'-bisphosphate + H(+). Functionally, sulfotransferase that utilizes 3'-phospho-5'-adenylyl sulfate (PAPS) as sulfonate donor to catalyze the sulfate conjugation of thyroxine. Involved in the metabolism of thyroxine. In Mus musculus (Mouse), this protein is Sulfotransferase 6B1 (Sult6b1).